The primary structure comprises 97 residues: Carboxysome shell protein CsoS1B (97 aa).

The BMC domain maps to 8 to 93 (ALGMIETRGL…PHKEVEPVLT (86 aa)).

Belongs to the bacterial microcompartments protein family. CsoS1 subfamily. As to quaternary structure, homohexamer with a small central pore.

It is found in the carboxysome. Its function is as follows. One of shell proteins of the carboxysome, a polyhedral inclusion where RuBisCO (ribulose bisphosphate carboxylase, ccbL-ccbS) is sequestered. Assembles into hexamers which make sheets that form the facets of the polyhedral carboxysome. The shell probably limits the diffusion of CO(2) into and out of the carboxysome. This Hydrogenovibrio crunogenus (strain DSM 25203 / XCL-2) (Thiomicrospira crunogena) protein is Carboxysome shell protein CsoS1B.